The chain runs to 266 residues: Lipooligosaccharide biosynthesis protein lic2B (266 aa).

The protein belongs to the glycosyltransferase 25 family.

Its function is as follows. Involved in extracellular lipooligosaccharide (LOS) biosynthesis and virulence expression. Involved in the synthesis of the oligosaccharide moiety of the LOS molecule by adding GalNAc. This chain is Lipooligosaccharide biosynthesis protein lic2B (lic2B), found in Haemophilus influenzae.